The following is a 293-amino-acid chain: Formamidopyrimidine-DNA glycosylase (293 aa).

Proline 2 functions as the Schiff-base intermediate with DNA in the catalytic mechanism. The active-site Proton donor is the glutamate 3. Lysine 60 serves as the catalytic Proton donor; for beta-elimination activity. Residues histidine 110, arginine 129, and arginine 174 each coordinate DNA. The FPG-type zinc finger occupies asparagine 259–lysine 293. Residue arginine 283 is the Proton donor; for delta-elimination activity of the active site.

This sequence belongs to the FPG family. In terms of assembly, monomer. Zn(2+) serves as cofactor.

It catalyses the reaction Hydrolysis of DNA containing ring-opened 7-methylguanine residues, releasing 2,6-diamino-4-hydroxy-5-(N-methyl)formamidopyrimidine.. The catalysed reaction is 2'-deoxyribonucleotide-(2'-deoxyribose 5'-phosphate)-2'-deoxyribonucleotide-DNA = a 3'-end 2'-deoxyribonucleotide-(2,3-dehydro-2,3-deoxyribose 5'-phosphate)-DNA + a 5'-end 5'-phospho-2'-deoxyribonucleoside-DNA + H(+). Functionally, involved in base excision repair of DNA damaged by oxidation or by mutagenic agents. Acts as a DNA glycosylase that recognizes and removes damaged bases. Has a preference for oxidized purines, such as 7,8-dihydro-8-oxoguanine (8-oxoG). Has AP (apurinic/apyrimidinic) lyase activity and introduces nicks in the DNA strand. Cleaves the DNA backbone by beta-delta elimination to generate a single-strand break at the site of the removed base with both 3'- and 5'-phosphates. The polypeptide is Formamidopyrimidine-DNA glycosylase (Prochlorococcus marinus (strain MIT 9312)).